A 499-amino-acid polypeptide reads, in one-letter code: Pleckstrin homology domain-containing family O member 2 (499 aa).

Over residues Met1–Gln11 the composition is skewed to basic and acidic residues. Positions Met1–Lys21 are disordered. One can recognise a PH domain in the interval Thr18–Asn119. Ser167 is modified (phosphoserine). Residues Leu170 to His419 are disordered. Over residues Arg201–Ala212 the composition is skewed to pro residues. Over residues Ser229–Ser238 the composition is skewed to low complexity. Phosphoserine occurs at positions 237 and 238. The span at Glu246–Ser258 shows a compositional bias: acidic residues. Ser273 carries the phosphoserine modification. Phosphothreonine occurs at positions 298 and 311. 2 stretches are compositionally biased toward low complexity: residues Glu329 to Glu349 and Ala367 to Pro386. Ser399 is subject to Phosphoserine. The stretch at Glu416 to Thr492 forms a coiled coil.

This is Pleckstrin homology domain-containing family O member 2 (PLEKHO2) from Bos taurus (Bovine).